A 473-amino-acid polypeptide reads, in one-letter code: Photosystem II CP43 reaction center protein (473 aa).

Positions 1–14 are excised as a propeptide; the sequence is MKTLYSLRRSYPVE. Thr-15 is subject to N-acetylthreonine. Thr-15 bears the Phosphothreonine mark. The next 5 membrane-spanning stretches (helical) occupy residues 69 to 93, 134 to 155, 178 to 200, 255 to 275, and 291 to 312; these read LFEV…PHLA, LIGP…KDRN, KALY…RKIT, KPFA…LSYS, and WFNN…ASQA. Glu-367 provides a ligand contact to [CaMn4O5] cluster. The helical transmembrane segment at 447–471 threads the bilayer; that stretch reads RARAAAAGFEKGIDRDFEPVLSMTP.

This sequence belongs to the PsbB/PsbC family. PsbC subfamily. In terms of assembly, PSII is composed of 1 copy each of membrane proteins PsbA, PsbB, PsbC, PsbD, PsbE, PsbF, PsbH, PsbI, PsbJ, PsbK, PsbL, PsbM, PsbT, PsbX, PsbY, PsbZ, Psb30/Ycf12, at least 3 peripheral proteins of the oxygen-evolving complex and a large number of cofactors. It forms dimeric complexes. Requires Binds multiple chlorophylls and provides some of the ligands for the Ca-4Mn-5O cluster of the oxygen-evolving complex. It may also provide a ligand for a Cl- that is required for oxygen evolution. PSII binds additional chlorophylls, carotenoids and specific lipids. as cofactor.

It is found in the plastid. It localises to the chloroplast thylakoid membrane. Functionally, one of the components of the core complex of photosystem II (PSII). It binds chlorophyll and helps catalyze the primary light-induced photochemical processes of PSII. PSII is a light-driven water:plastoquinone oxidoreductase, using light energy to abstract electrons from H(2)O, generating O(2) and a proton gradient subsequently used for ATP formation. In Pinus koraiensis (Korean pine), this protein is Photosystem II CP43 reaction center protein.